Here is a 123-residue protein sequence, read N- to C-terminus: Defensin beta 118 (123 aa).

The signal sequence occupies residues 1 to 19 (MKLLLLALPMLVLLPQVIP). 3 disulfides stabilise this stretch: cysteine 27-cysteine 54, cysteine 34-cysteine 48, and cysteine 38-cysteine 55. Positions 65 to 123 (VPTTSPTPLSDSTPGIIDDILTVRFTTDYFEVSSKKDMIEESEAGRGTETSLPNVHHSS) are excised as a propeptide. A compositionally biased stretch (basic and acidic residues) spans 100–110 (KDMIEESEAGR). A disordered region spans residues 100-123 (KDMIEESEAGRGTETSLPNVHHSS). Residues 112-123 (TETSLPNVHHSS) show a composition bias toward polar residues.

It belongs to the beta-defensin family. In terms of processing, the three-dimensional structure formed by the three intramolecular disulfide bridges is indispensable for antimicrobial activity.

Its subcellular location is the secreted. Its function is as follows. Host defense peptide that exhibits antimicrobial activity against both Gram-negative bacteria, such as E.coli and S.typhimurium, and Gram-positive bacteria, such as S.aureus and B.subtilis. Inhibits cell adhesion of E.coli on intestinal epithelial enterocytes. Causes rapid permeabilization of both the outer and inner membrane of E.coli, leading to morphological alterations on the bacterial surface. Binds to bacterial lipopolysaccharides (LPS) with high affinity, and may thereby be involved in immunoregulation through LPS neutralization. May contribute to epididymal innate immunity and protect the sperm against attack by microorganisms. The protein is Defensin beta 118 (DEFB118) of Gorilla gorilla gorilla (Western lowland gorilla).